The primary structure comprises 88 residues: FXYD domain-containing ion transport regulator 3 (88 aa).

The not cleaved signal peptide spans 1 to 20 (MQEVVLSLLVLLAGLPTLDA). The Extracellular portion of the chain corresponds to 1–38 (MQEVVLSLLVLLAGLPTLDANDPENKNDPFYYDWYSLR). The chain crosses the membrane as a helical span at residues 39–59 (VGGLICAGILCALGIIVLMSG). Residues 60–88 (KCKCKFRQKPSHRPGEGPPLITPGSAHNC) lie on the Cytoplasmic side of the membrane. The tract at residues 67 to 88 (QKPSHRPGEGPPLITPGSAHNC) is disordered.

The protein belongs to the FXYD family. In terms of assembly, regulatory subunit of the sodium/potassium-transporting ATPase which is composed of a catalytic alpha subunit, a non-catalytic beta subunit and an additional regulatory subunit. Interacts with catalytic alpha subunit ATP1A1. Also interacts with non-catalytic beta subunit ATP1B1. Interacts with the ATP1A1-ATP1B1, ATP1A2-ATP1B1 and ATP1A3-ATP1B1 NKA isozymes. In terms of processing, glutathionylated. As to expression, expressed at high levels in heart, skeletal muscle and liver with low levels of expression in breast, brain, lung, stomach and colon. In the gastric gland, mainly expressed in the mucus cells forming the upper part of the gland and is absent from the parietal cells.

It is found in the cell membrane. Associates with and regulates the activity of the sodium/potassium-transporting ATPase (NKA) which transports Na(+) out of the cell and K(+) into the cell. Reduces glutathionylation of the NKA beta-1 subunit ATP1B1, thus reversing glutathionylation-mediated inhibition of ATP1B1. Induces a hyperpolarization-activated chloride current when expressed in Xenopus oocytes. In Mus musculus (Mouse), this protein is FXYD domain-containing ion transport regulator 3 (Fxyd3).